The primary structure comprises 416 residues: Tiggy-winkle hedgehog protein (416 aa).

A signal peptide spans Met1–Ala26. Residue Cys27 is the site of N-palmitoyl cysteine attachment. Residues Glu92, Glu93, Asp98, Thr128, Glu129, Asp132, and Asp134 each contribute to the Ca(2+) site. Positions 143, 150, and 185 each coordinate Zn(2+). A lipid anchor (Cholesterol glycine ester) is attached at Gly200.

This sequence belongs to the hedgehog family. In terms of assembly, multimer. Interacts with HHATL/GUP1 which negatively regulates HHAT-mediated palmitoylation of the TWHH N-terminus. Interacts with BOC and CDON. Interacts with HHIP. Interacts with DISP1 via its cholesterol anchor. Interacts with SCUBE2. Post-translationally, the C-terminal domain displays an autoproteolysis activity and a cholesterol transferase activity. Both activities result in the cleavage of the full-length protein into two parts (N-product and C-product) followed by the covalent attachment of a cholesterol moiety to the C-terminal of the newly generated N-product. Cholesterylation is required for the tiggy-winkle hedgehog protein N-product targeting to lipid rafts and multimerization. N-product is the active species in both local and long-range signaling, whereas the C-product is degraded in the endoplasmic reticulum. N-palmitoylation by HHAT of N-product is required for tiggy-winkle hedgehog protein N-product multimerization and full activity. It is a prerequisite for the membrane-proximal positioning and the subsequent shedding of this N-terminal peptide. In terms of processing, the lipidated N- and C-terminal peptides of N-product can be cleaved (shedding). The N-terminal palmitoylated peptide is cleaved at the Cardin-Weintraub (CW) motif site. The cleavage reduced the interactions with heparan sulfate. The cleavage is enhanced by SCUBE2. Expressed in the ventral midline of the neural tube and brain. In the developing brain, expression occurs in domains that include a discrete region in the floor of the diencephalon. Not detected in the notochord or developing fin bud.

The protein localises to the cell membrane. Its subcellular location is the endoplasmic reticulum membrane. It localises to the golgi apparatus membrane. Its function is as follows. The C-terminal part of the tiggy-winkle hedgehog protein precursor displays an autoproteolysis and a cholesterol transferase activity. Both activities result in the cleavage of the full-length protein into two parts (N-product and C-product) followed by the covalent attachment of a cholesterol moiety to the C-terminal of the newly generated N-product. Both activities occur in the endoplasmic reticulum. Once cleaved, the C-product is degraded in the endoplasmic reticulum. The dually lipidated tiggy-winkle hedgehog protein N-product is a morphogen which is essential for a variety of patterning events during development. Involved in dorso-ventral patterning of the brain and in early patterning of the developing eyes. Binds to the patched (PTCH1) receptor, which functions in association with smoothened (SMO), to activate the transcription of target genes. This is Tiggy-winkle hedgehog protein (shhb) from Danio rerio (Zebrafish).